The chain runs to 396 residues: Ornithine aminotransferase 2 (396 aa).

At K255 the chain carries N6-(pyridoxal phosphate)lysine.

The protein belongs to the class-III pyridoxal-phosphate-dependent aminotransferase family. OAT subfamily. Requires pyridoxal 5'-phosphate as cofactor.

The protein localises to the cytoplasm. It carries out the reaction a 2-oxocarboxylate + L-ornithine = L-glutamate 5-semialdehyde + an L-alpha-amino acid. It functions in the pathway amino-acid biosynthesis; L-proline biosynthesis; L-glutamate 5-semialdehyde from L-ornithine: step 1/1. Catalyzes the interconversion of ornithine to glutamate semialdehyde. The chain is Ornithine aminotransferase 2 from Staphylococcus aureus (strain COL).